Consider the following 91-residue polypeptide: MSFLNGLFGRKRDSSAELAKQRLLTVLIDDRYKLTPEMMAQMKADLAEVLKRYLPAIDAEQIEVTLSRGEAHDLLKADVPLRRTSEGPSNR.

It belongs to the MinE family.

Prevents the cell division inhibition by proteins MinC and MinD at internal division sites while permitting inhibition at polar sites. This ensures cell division at the proper site by restricting the formation of a division septum at the midpoint of the long axis of the cell. The polypeptide is Cell division topological specificity factor (Chloroflexus aggregans (strain MD-66 / DSM 9485)).